The primary structure comprises 389 residues: Lipid-A-disaccharide synthase (389 aa).

Belongs to the LpxB family.

It carries out the reaction a lipid X + a UDP-2-N,3-O-bis[(3R)-3-hydroxyacyl]-alpha-D-glucosamine = a lipid A disaccharide + UDP + H(+). It participates in bacterial outer membrane biogenesis; LPS lipid A biosynthesis. Condensation of UDP-2,3-diacylglucosamine and 2,3-diacylglucosamine-1-phosphate to form lipid A disaccharide, a precursor of lipid A, a phosphorylated glycolipid that anchors the lipopolysaccharide to the outer membrane of the cell. This chain is Lipid-A-disaccharide synthase, found in Paraburkholderia phytofirmans (strain DSM 17436 / LMG 22146 / PsJN) (Burkholderia phytofirmans).